The chain runs to 713 residues: Polyribonucleotide nucleotidyltransferase (713 aa).

Residues aspartate 493 and aspartate 499 each coordinate Mg(2+). One can recognise a KH domain in the interval 560–619 (PRMITIKINPEKIRDVIGKGGSVIRALTEETGTTIDISDDGVVTIASTNSEGMAEAKKRI). The S1 motif domain occupies 629 to 697 (GHVYEGTVLK…EKGRVRLSAK (69 aa)).

It belongs to the polyribonucleotide nucleotidyltransferase family. It depends on Mg(2+) as a cofactor.

Its subcellular location is the cytoplasm. It catalyses the reaction RNA(n+1) + phosphate = RNA(n) + a ribonucleoside 5'-diphosphate. Involved in mRNA degradation. Catalyzes the phosphorolysis of single-stranded polyribonucleotides processively in the 3'- to 5'-direction. The chain is Polyribonucleotide nucleotidyltransferase from Burkholderia pseudomallei (strain 1106a).